We begin with the raw amino-acid sequence, 297 residues long: Acetylglutamate kinase (297 aa).

Residues 68–69, R90, and N195 each bind substrate; that span reads GG.

This sequence belongs to the acetylglutamate kinase family. ArgB subfamily.

The protein localises to the cytoplasm. The catalysed reaction is N-acetyl-L-glutamate + ATP = N-acetyl-L-glutamyl 5-phosphate + ADP. It functions in the pathway amino-acid biosynthesis; L-arginine biosynthesis; N(2)-acetyl-L-ornithine from L-glutamate: step 2/4. Its function is as follows. Catalyzes the ATP-dependent phosphorylation of N-acetyl-L-glutamate. The sequence is that of Acetylglutamate kinase from Chelativorans sp. (strain BNC1).